The following is a 115-amino-acid chain: DNA-directed RNA polymerase II subunit RPB11-b1 (115 aa).

Belongs to the archaeal Rpo11/eukaryotic RPB11/RPC19 RNA polymerase subunit family. Component of the RNA polymerase II (Pol II) complex consisting of 12 subunits. Ubiquitously expressed.

It is found in the nucleus. DNA-dependent RNA polymerase catalyzes the transcription of DNA into RNA using the four ribonucleoside triphosphates as substrates. Component of RNA polymerase II which synthesizes mRNA precursors and many functional non-coding RNAs. Pol II is the central component of the basal RNA polymerase II transcription machinery. It is composed of mobile elements that move relative to each other. RPB11 is part of the core element with the central large cleft. This chain is DNA-directed RNA polymerase II subunit RPB11-b1 (POLR2J2), found in Homo sapiens (Human).